A 389-amino-acid chain; its full sequence is Xylose isomerase (389 aa).

Catalysis depends on residues H101 and D104. Residues E232, E268, H271, D296, D307, and D309 each contribute to the Mg(2+) site.

The protein belongs to the xylose isomerase family. As to quaternary structure, homotetramer. It depends on Mg(2+) as a cofactor.

It localises to the cytoplasm. The enzyme catalyses alpha-D-xylose = alpha-D-xylulofuranose. In Lactococcus lactis subsp. cremoris (strain SK11), this protein is Xylose isomerase.